A 545-amino-acid chain; its full sequence is Membrane protein insertase YidC (545 aa).

A helical membrane pass occupies residues 6–26 (LILFSALVLVLFLMWDAWQTD). The disordered stretch occupies residues 34-59 (PPPPQPTASSGESSPVLPEAVPDAPP). 3 consecutive transmembrane segments (helical) span residues 357–377 (LVGN…LVFF), 428–448 (GGCL…WMLL), and 505–525 (PVMF…YWVV).

The protein belongs to the OXA1/ALB3/YidC family. Type 1 subfamily. Interacts with the Sec translocase complex via SecD. Specifically interacts with transmembrane segments of nascent integral membrane proteins during membrane integration.

The protein resides in the cell inner membrane. Functionally, required for the insertion and/or proper folding and/or complex formation of integral membrane proteins into the membrane. Involved in integration of membrane proteins that insert both dependently and independently of the Sec translocase complex, as well as at least some lipoproteins. Aids folding of multispanning membrane proteins. The sequence is that of Membrane protein insertase YidC from Nitrosococcus oceani (strain ATCC 19707 / BCRC 17464 / JCM 30415 / NCIMB 11848 / C-107).